The primary structure comprises 132 residues: MIVDTSVWIAYLSTSESLASRWLADRIAADSTVIVPEVVMMELLIGKTDEDTAALRRRLLQRFAIEPLAPVRDAEDAAAIHRRCRRGGDTVRSLIDCQVAAMALRIGVAVAHRDRDYEAIRTHCGLRTEPLF.

Residues 1-121 form the PINc domain; the sequence is MIVDTSVWIA…HRDRDYEAIR (121 aa). Residue Asp-96 participates in Mg(2+) binding. Asp-96, Asp-114, and Asp-116 together coordinate Mn(2+).

Belongs to the PINc/VapC protein family. As to quaternary structure, crystallizes as a VapB15-VapC15(2) heterotrimer and as a VapB15(2)-VapC15(2) heterotetramer; each toxin pair forms a homodimer which creates a channel in which the antitoxin binds. Mg(2+) serves as cofactor. Mn(2+) is required as a cofactor.

RNase activity inhibited by EDTA. In terms of biological role, toxic component of a type II toxin-antitoxin (TA) system. Degrades total E.coli RNA, which is partially inhibited by cognate antitoxin VapB15. Upon expression in M.smegmatis inhibits colony formation, which is neutralized by coexpression with VapB15. This is Ribonuclease VapC15 from Mycobacterium tuberculosis (strain ATCC 25618 / H37Rv).